Reading from the N-terminus, the 628-residue chain is MDSVVFEDVAVDFTLEEWALLDSAQRDLYRDVMLETFQNLASVDDETQFKASGSVSQQDIYGEKIPKESKIATFTRNVSWASVLGKIWDSLSIEDQTTNQGRNLSRNHGLERLCESNDQCGEALSQIPHLNLYKKIPPGVKQYEYNTYGKVFMHRRTSLKSPITVHTGHKPYQCQECGQAYSCRSHLRMHVRTHNGERPYVCKLCGKTFPRTSSLNRHVRIHTAEKTYECKQCGKAFIDFSSLTSHLRSHTGEKPYKCKECGKAFSYSSTFRRHTITHTGEKPYKCKECAEAFSYSSTFRRHMISHTGEKPHKCKECGEAFSYSSAFRRHMITHTGEKPYECKQCGKTFIYLQSFRRHERIHTGEKPYECKQCGKTFIYPQSFRRHERTHGGEKPYECNQCGKAFSHPSSFRGHMRVHTGEKPYECKQCGKTFNWPISLRKHMRTHTREKPYECKQCGKAFSLSACFREHVRMHPEDKSYECKLCGKAFYCHISLQKHMRRHTAEKLYKCKQCGKAFSWPELLQQHVRTHTVEKPYECKECGKVFKWPSSLPIHMRLHTGEKPYQCKHCGKAFNCSSSLRRHVRIHTTEKQYKCNVGHPPANEFMCSASEKSHQERDLIKVVNMVLPL.

Residues 4 to 77 form the KRAB domain; that stretch reads VVFEDVAVDF…ESKIATFTRN (74 aa). The segment at 172 to 194 adopts a C2H2-type 1; degenerate zinc-finger fold; it reads YQCQECGQAYSCRSHLRMHVRTH. C2H2-type zinc fingers lie at residues 200–222, 228–250, 256–278, 284–306, 312–334, 340–362, 368–390, 396–418, 424–446, 452–474, 480–502, 508–530, 536–558, and 564–586; these read YVCK…VRIH, YECK…LRSH, YKCK…TITH, YKCK…MISH, HKCK…MITH, YECK…ERIH, YECK…ERTH, YECN…MRVH, YECK…MRTH, YECK…VRMH, YECK…MRRH, YKCK…VRTH, YECK…MRLH, and YQCK…VRIH.

This sequence belongs to the krueppel C2H2-type zinc-finger protein family.

The protein resides in the nucleus. Functionally, may be involved in transcriptional regulation. This is Zinc finger protein 555 (ZNF555) from Homo sapiens (Human).